Reading from the N-terminus, the 351-residue chain is Glycerol-3-phosphate dehydrogenase [NAD(P)+] (351 aa).

Positions 18, 19, 38, and 122 each coordinate NADPH. Sn-glycerol 3-phosphate is bound by residues Lys122, Gly153, and Ser155. Ala157 provides a ligand contact to NADPH. Residues Lys208, Asp261, Ser271, Arg272, and Asn273 each contribute to the sn-glycerol 3-phosphate site. Catalysis depends on Lys208, which acts as the Proton acceptor. An NADPH-binding site is contributed by Arg272. NADPH is bound at residue Glu297.

This sequence belongs to the NAD-dependent glycerol-3-phosphate dehydrogenase family.

It is found in the cytoplasm. It carries out the reaction sn-glycerol 3-phosphate + NAD(+) = dihydroxyacetone phosphate + NADH + H(+). The enzyme catalyses sn-glycerol 3-phosphate + NADP(+) = dihydroxyacetone phosphate + NADPH + H(+). It participates in membrane lipid metabolism; glycerophospholipid metabolism. Its function is as follows. Catalyzes the reduction of the glycolytic intermediate dihydroxyacetone phosphate (DHAP) to sn-glycerol 3-phosphate (G3P), the key precursor for phospholipid synthesis. This chain is Glycerol-3-phosphate dehydrogenase [NAD(P)+], found in Bordetella pertussis (strain Tohama I / ATCC BAA-589 / NCTC 13251).